The primary structure comprises 226 residues: Phosphoribosylformylglycinamidine synthase subunit PurQ (226 aa).

The Glutamine amidotransferase type-1 domain occupies 3–225; the sequence is FAVIVFPGSN…VKWGARHVTY (223 aa). Catalysis depends on Cys86, which acts as the Nucleophile. Catalysis depends on residues His194 and Glu196.

In terms of assembly, part of the FGAM synthase complex composed of 1 PurL, 1 PurQ and 2 PurS subunits.

Its subcellular location is the cytoplasm. The enzyme catalyses N(2)-formyl-N(1)-(5-phospho-beta-D-ribosyl)glycinamide + L-glutamine + ATP + H2O = 2-formamido-N(1)-(5-O-phospho-beta-D-ribosyl)acetamidine + L-glutamate + ADP + phosphate + H(+). It carries out the reaction L-glutamine + H2O = L-glutamate + NH4(+). It participates in purine metabolism; IMP biosynthesis via de novo pathway; 5-amino-1-(5-phospho-D-ribosyl)imidazole from N(2)-formyl-N(1)-(5-phospho-D-ribosyl)glycinamide: step 1/2. Part of the phosphoribosylformylglycinamidine synthase complex involved in the purines biosynthetic pathway. Catalyzes the ATP-dependent conversion of formylglycinamide ribonucleotide (FGAR) and glutamine to yield formylglycinamidine ribonucleotide (FGAM) and glutamate. The FGAM synthase complex is composed of three subunits. PurQ produces an ammonia molecule by converting glutamine to glutamate. PurL transfers the ammonia molecule to FGAR to form FGAM in an ATP-dependent manner. PurS interacts with PurQ and PurL and is thought to assist in the transfer of the ammonia molecule from PurQ to PurL. The chain is Phosphoribosylformylglycinamidine synthase subunit PurQ from Exiguobacterium sp. (strain ATCC BAA-1283 / AT1b).